The primary structure comprises 390 residues: Chorismate synthase 1 (390 aa).

NADP(+)-binding residues include R39 and R45. Positions 95–117 (EQEEKEMKRKVTKPRPGHADLNG) are disordered. FMN is bound by residues 132–134 (RSS), 253–254 (NA), G298, 313–317 (KPIPT), and R339.

The protein belongs to the chorismate synthase family. In terms of assembly, homotetramer. It depends on FMNH2 as a cofactor.

It carries out the reaction 5-O-(1-carboxyvinyl)-3-phosphoshikimate = chorismate + phosphate. The protein operates within metabolic intermediate biosynthesis; chorismate biosynthesis; chorismate from D-erythrose 4-phosphate and phosphoenolpyruvate: step 7/7. Its function is as follows. Catalyzes the anti-1,4-elimination of the C-3 phosphate and the C-6 proR hydrogen from 5-enolpyruvylshikimate-3-phosphate (EPSP) to yield chorismate, which is the branch point compound that serves as the starting substrate for the three terminal pathways of aromatic amino acid biosynthesis. This reaction introduces a second double bond into the aromatic ring system. This chain is Chorismate synthase 1, found in Bacillus cereus (strain ZK / E33L).